Here is a 470-residue protein sequence, read N- to C-terminus: Aminodeoxychorismate synthase component 1 (470 aa).

Belongs to the anthranilate synthase component I family. In terms of assembly, monomer. Heterodimer consisting of two non-identical subunits: a glutamine amidotransferase subunit (PabA) and a aminodeoxychorismate synthase subunit (PabB). Requires Mg(2+) as cofactor.

It carries out the reaction chorismate + L-glutamine = 4-amino-4-deoxychorismate + L-glutamate. It participates in cofactor biosynthesis; tetrahydrofolate biosynthesis; 4-aminobenzoate from chorismate: step 1/2. In terms of biological role, part of a heterodimeric complex that catalyzes the two-step biosynthesis of 4-amino-4-deoxychorismate (ADC), a precursor of p-aminobenzoate (PABA) and tetrahydrofolate. In the first step, a glutamine amidotransferase (PabA) generates ammonia as a substrate that, along with chorismate, is used in the second step, catalyzed by aminodeoxychorismate synthase (PabB) to produce ADC. In Lactococcus lactis subsp. lactis (Streptococcus lactis), this protein is Aminodeoxychorismate synthase component 1 (pabB).